The following is a 45-amino-acid chain: Ribosome-inactivating protein TAP-29 (45 aa).

Belongs to the ribosome-inactivating protein family. Type 1 RIP subfamily.

The catalysed reaction is Endohydrolysis of the N-glycosidic bond at one specific adenosine on the 28S rRNA.. Its function is as follows. Capable of inhibiting HIV-1 infection and replication. It inactivates eukaryotic 60S ribosomal subunits. The protein is Ribosome-inactivating protein TAP-29 of Trichosanthes kirilowii (Chinese snake gourd).